The primary structure comprises 124 residues: Large ribosomal subunit protein bL12 (124 aa).

The protein belongs to the bacterial ribosomal protein bL12 family. Homodimer. Part of the ribosomal stalk of the 50S ribosomal subunit. Forms a multimeric L10(L12)X complex, where L10 forms an elongated spine to which 2 to 4 L12 dimers bind in a sequential fashion. Binds GTP-bound translation factors.

Functionally, forms part of the ribosomal stalk which helps the ribosome interact with GTP-bound translation factors. Is thus essential for accurate translation. In Wolinella succinogenes (strain ATCC 29543 / DSM 1740 / CCUG 13145 / JCM 31913 / LMG 7466 / NCTC 11488 / FDC 602W) (Vibrio succinogenes), this protein is Large ribosomal subunit protein bL12.